The primary structure comprises 993 residues: Chromosome transmission fidelity protein 18 homolog (993 aa).

The tract at residues 26 to 72 (PDEFNAYDGPSTSKQAAEKQKENRAPVAALRDSTRLGNSTLGSPQLS) is disordered. Residues 60 to 72 (RLGNSTLGSPQLS) show a composition bias toward polar residues. Residue 427 to 434 (GPPGLGKT) participates in ATP binding. A disordered region spans residues 892–913 (AAPKGGAPSAPAAKKKTSGAAA). Residues 894–913 (PKGGAPSAPAAKKKTSGAAA) are compositionally biased toward low complexity.

It belongs to the activator 1 small subunits family. CTF18 subfamily. Component of the CTF18-RFC complex.

It is found in the nucleus. In terms of biological role, chromosome cohesion factor involved in sister chromatid cohesion and fidelity of chromosome transmission. Component of one of the cell nuclear antigen loader complexes, CTF18-replication factor C (CTF18-RFC). The CTF18-RFC complex catalyzes the ATP-dependent loading of PCNA onto primed and gapped DNA and has weak ATPase activity. The CTF18-RFC complex catalyzes the ATP-dependent loading of PCNA onto primed and gapped DNA. In Drosophila melanogaster (Fruit fly), this protein is Chromosome transmission fidelity protein 18 homolog.